The primary structure comprises 631 residues: Alpha-dioxygenase 2 (631 aa).

The N-terminal stretch at 1 to 20 (MGFSPSSSWFLHPQLHHVVS) is a signal peptide. Residue His157 coordinates heme b. Catalysis depends on Tyr378, which acts as the Proton acceptor. His381 serves as a coordination point for heme b. Residue Asn583 is glycosylated (N-linked (GlcNAc...) asparagine).

It belongs to the peroxidase family. Heme b is required as a cofactor. Expressed in seedlings (cotyledons, young leaves, and hypocotyls), flowers, siliques and old leaves.

Functionally, alpha-dioxygenase that catalyzes the primary oxygenation of fatty acids into oxylipins. May be involved in the senescence process. In Arabidopsis thaliana (Mouse-ear cress), this protein is Alpha-dioxygenase 2 (DOX2).